Consider the following 601-residue polypeptide: DNA ligase (601 aa).

D258 contacts ATP. K260 serves as the catalytic N6-AMP-lysine intermediate. Positions 265, 280, 310, 350, 427, and 433 each coordinate ATP.

This sequence belongs to the ATP-dependent DNA ligase family. Interacts with the PCNA heterotrimer, probably via subunit PCNA3. A divalent metal cation serves as cofactor.

It catalyses the reaction ATP + (deoxyribonucleotide)n-3'-hydroxyl + 5'-phospho-(deoxyribonucleotide)m = (deoxyribonucleotide)n+m + AMP + diphosphate.. With respect to regulation, ligase activity stimulated by PCNA heterotrimer. Its function is as follows. DNA ligase that seals nicks in double-stranded DNA during DNA replication, DNA recombination and DNA repair. Interaction with PCNA enhances ligase activity. DNA polymerase I, DNA ligase and the flap endonuclease may be constitutively associated with the PCNA heterotrimer forming a scanning complex able to couple DNA synthesis and Okazaki fragment maturation. The polypeptide is DNA ligase (Saccharolobus solfataricus (strain ATCC 35092 / DSM 1617 / JCM 11322 / P2) (Sulfolobus solfataricus)).